Consider the following 294-residue polypeptide: Small ribosomal subunit biogenesis GTPase RsgA 2, mitochondrial (294 aa).

Residues 1 to 68 (MQTFSSAAAL…RSFLAPVLPL (68 aa)) constitute a mitochondrion transit peptide. The CP-type G domain occupies 155–294 (VSEVLDPPVA…VSFFLSYFIL (140 aa)). GTP is bound at residue 255 to 263 (GPSGVGKSS).

The protein belongs to the TRAFAC class YlqF/YawG GTPase family.

It localises to the mitochondrion. This is Small ribosomal subunit biogenesis GTPase RsgA 2, mitochondrial from Arabidopsis thaliana (Mouse-ear cress).